We begin with the raw amino-acid sequence, 437 residues long: GTPase Era, mitochondrial (437 aa).

A mitochondrion-targeting transit peptide spans 1–43; it reads MAAPSWRGARLVQSVLRVWQVGPHVARERVIPFSSLLGFQRRC. Residues 112 to 330 enclose the Era-type G domain; sequence RVLRVVLLGA…QYLLTQAQPG (219 aa). The interval 120–127 is G1; that stretch reads GAPNAGKS. 120 to 127 contributes to the GTP binding site; it reads GAPNAGKS. The segment at 146–150 is G2; it reads HTTRC. Residues 167-170 form a G3 region; it reads DTPG. 167–171 serves as a coordination point for GTP; it reads DTPGI. Phosphoserine is present on S173. 236-239 serves as a coordination point for GTP; sequence NKVD. A G4 region spans residues 236–239; that stretch reads NKVD. The segment at 271-290 is disordered; it reads HSHPGTHCPSPAVKDPNTQS. Residues 308–310 form a G5 region; the sequence is LSA. The KH type-2 domain occupies 360-437; that stretch reads LPQEVPYNVQ…DIRLSVKLLK (78 aa).

The protein belongs to the TRAFAC class TrmE-Era-EngA-EngB-Septin-like GTPase superfamily. Era GTPase family.

The protein resides in the mitochondrion matrix. Its subcellular location is the mitochondrion inner membrane. Probable GTPase that plays a role in the mitochondrial ribosomal small subunit assembly. Specifically binds the 12S mitochondrial rRNA (12S mt-rRNA) to a 33 nucleotide section delineating the 3' terminal stem-loop region. May act as a chaperone that protects the 12S mt-rRNA on the 28S mitoribosomal subunit during ribosomal small subunit assembly. This chain is GTPase Era, mitochondrial (ERAL1), found in Homo sapiens (Human).